The primary structure comprises 376 residues: Chaperone protein DnaJ (376 aa).

The 65-residue stretch at 4-68 (DYYEILGVAR…ETRARYDRFG (65 aa)) folds into the J domain. The segment at 102–121 (GGMGGPTQQRRRGGPARGDD) is disordered. The CR-type zinc finger occupies 136–218 (GGEKEIRISH…CDGKGTNQVT (83 aa)). The Zn(2+) site is built by Cys-149, Cys-152, Cys-166, Cys-169, Cys-192, Cys-195, Cys-206, and Cys-209. CXXCXGXG motif repeat units follow at residues 149 to 156 (CETCSGSG), 166 to 173 (CSTCSGSG), 192 to 199 (CPTCNGTG), and 206 to 213 (CDACDGKG).

It belongs to the DnaJ family. As to quaternary structure, homodimer. Requires Zn(2+) as cofactor.

It localises to the cytoplasm. Participates actively in the response to hyperosmotic and heat shock by preventing the aggregation of stress-denatured proteins and by disaggregating proteins, also in an autonomous, DnaK-independent fashion. Unfolded proteins bind initially to DnaJ; upon interaction with the DnaJ-bound protein, DnaK hydrolyzes its bound ATP, resulting in the formation of a stable complex. GrpE releases ADP from DnaK; ATP binding to DnaK triggers the release of the substrate protein, thus completing the reaction cycle. Several rounds of ATP-dependent interactions between DnaJ, DnaK and GrpE are required for fully efficient folding. Also involved, together with DnaK and GrpE, in the DNA replication of plasmids through activation of initiation proteins. The protein is Chaperone protein DnaJ of Trichormus variabilis (strain ATCC 29413 / PCC 7937) (Anabaena variabilis).